Reading from the N-terminus, the 632-residue chain is Effector protein hopAD1 (632 aa).

The interval 13 to 34 is disordered; the sequence is TAVDSSLPTSATSQTISNTKSR. Residues 15–32 are compositionally biased toward polar residues; sequence VDSSLPTSATSQTISNTK.

The protein localises to the secreted. The sequence is that of Effector protein hopAD1 (hopAD1) from Pseudomonas syringae pv. tomato (strain ATCC BAA-871 / DC3000).